The primary structure comprises 189 residues: Peptidyl-tRNA hydrolase (189 aa).

H14 is a tRNA binding site. H19 acts as the Proton acceptor in catalysis. Y64, N66, and N112 together coordinate tRNA.

Belongs to the PTH family. Monomer.

It is found in the cytoplasm. The catalysed reaction is an N-acyl-L-alpha-aminoacyl-tRNA + H2O = an N-acyl-L-amino acid + a tRNA + H(+). Hydrolyzes ribosome-free peptidyl-tRNAs (with 1 or more amino acids incorporated), which drop off the ribosome during protein synthesis, or as a result of ribosome stalling. In terms of biological role, catalyzes the release of premature peptidyl moieties from peptidyl-tRNA molecules trapped in stalled 50S ribosomal subunits, and thus maintains levels of free tRNAs and 50S ribosomes. The chain is Peptidyl-tRNA hydrolase from Chlorobium phaeobacteroides (strain BS1).